A 187-amino-acid polypeptide reads, in one-letter code: NADH-quinone oxidoreductase subunit C 2 (187 aa).

A disordered region spans residues 153-187 (YKDKLNPFGAEGPPPTQPDLATRDIPQGRPSTPES).

The protein belongs to the complex I 30 kDa subunit family. In terms of assembly, NDH-1 is composed of 14 different subunits. Subunits NuoB, C, D, E, F, and G constitute the peripheral sector of the complex.

The protein resides in the cell inner membrane. It carries out the reaction a quinone + NADH + 5 H(+)(in) = a quinol + NAD(+) + 4 H(+)(out). Its function is as follows. NDH-1 shuttles electrons from NADH, via FMN and iron-sulfur (Fe-S) centers, to quinones in the respiratory chain. The immediate electron acceptor for the enzyme in this species is believed to be ubiquinone. Couples the redox reaction to proton translocation (for every two electrons transferred, four hydrogen ions are translocated across the cytoplasmic membrane), and thus conserves the redox energy in a proton gradient. The polypeptide is NADH-quinone oxidoreductase subunit C 2 (Rhizobium etli (strain CIAT 652)).